Reading from the N-terminus, the 290-residue chain is Diaminopimelate epimerase (290 aa).

Residues N14 and N67 each coordinate substrate. Residue C76 is the Proton donor of the active site. Residues 77-78 (GN), N166, N199, and 217-218 (ER) contribute to the substrate site. C226 functions as the Proton acceptor in the catalytic mechanism. A substrate-binding site is contributed by 227-228 (GT).

This sequence belongs to the diaminopimelate epimerase family. In terms of assembly, homodimer.

It localises to the cytoplasm. It carries out the reaction (2S,6S)-2,6-diaminopimelate = meso-2,6-diaminopimelate. It participates in amino-acid biosynthesis; L-lysine biosynthesis via DAP pathway; DL-2,6-diaminopimelate from LL-2,6-diaminopimelate: step 1/1. Functionally, catalyzes the stereoinversion of LL-2,6-diaminopimelate (L,L-DAP) to meso-diaminopimelate (meso-DAP), a precursor of L-lysine and an essential component of the bacterial peptidoglycan. This chain is Diaminopimelate epimerase, found in Geobacillus kaustophilus (strain HTA426).